The primary structure comprises 305 residues: Ribonuclease BN (305 aa).

Residues His64, His66, Asp68, His69, His141, Asp212, and His270 each coordinate Zn(2+). The active-site Proton acceptor is the Asp68.

The protein belongs to the RNase Z family. RNase BN subfamily. In terms of assembly, homodimer. The cofactor is Zn(2+).

Zinc phosphodiesterase, which has both exoribonuclease and endoribonuclease activities. This is Ribonuclease BN from Enterobacter sp. (strain 638).